A 165-amino-acid polypeptide reads, in one-letter code: Large ribosomal subunit protein uL10 (165 aa).

This sequence belongs to the universal ribosomal protein uL10 family. As to quaternary structure, part of the ribosomal stalk of the 50S ribosomal subunit. The N-terminus interacts with L11 and the large rRNA to form the base of the stalk. The C-terminus forms an elongated spine to which L12 dimers bind in a sequential fashion forming a multimeric L10(L12)X complex.

Its function is as follows. Forms part of the ribosomal stalk, playing a central role in the interaction of the ribosome with GTP-bound translation factors. This chain is Large ribosomal subunit protein uL10, found in Buchnera aphidicola subsp. Acyrthosiphon pisum (strain 5A).